The chain runs to 158 residues: Pleckstrin homology domain-containing family J member 1 (158 aa).

Residues 15–108 (PTQRAAELGM…WIDAIIKASY (94 aa)) enclose the PH domain.

The sequence is that of Pleckstrin homology domain-containing family J member 1 (plekhj1) from Danio rerio (Zebrafish).